Consider the following 192-residue polypeptide: uncharacterized protein (192 aa).

To R.meliloti RA0936 and y4nF.

This is an uncharacterized protein from Sinorhizobium fredii (strain NBRC 101917 / NGR234).